Here is a 361-residue protein sequence, read N- to C-terminus: Lactate-binding periplasmic protein TTHA0766 (361 aa).

A signal peptide (tat-type signal) is located at residues 1-22; the sequence is MKRVSRRAFLRRLGVGVAATAA. Substrate-binding residues include tyrosine 101, asparagine 158, and arginine 178. Asparagine 158 contributes to the Ca(2+) binding site. Residues aspartate 216, phenylalanine 217, and glutamine 247 each coordinate Ca(2+). Substrate-binding positions include phenylalanine 217 and 247–250; that span reads QPVD.

Belongs to the bacterial solute-binding protein 7 family. As to quaternary structure, homodimer. The complex comprises the extracytoplasmic solute receptor protein TTHA0766, and the two putative transmembrane proteins TTHA0767 and TTHA0768.

It is found in the periplasm. Its function is as follows. Part of the tripartite ATP-independent periplasmic (TRAP) transport system involved in the uptake of lactate. This protein specifically binds L-lactate. The chain is Lactate-binding periplasmic protein TTHA0766 from Thermus thermophilus (strain ATCC 27634 / DSM 579 / HB8).